The chain runs to 238 residues: tRNA1(Val) (adenine(37)-N6)-methyltransferase (238 aa).

It belongs to the methyltransferase superfamily. tRNA (adenine-N(6)-)-methyltransferase family.

The protein resides in the cytoplasm. The enzyme catalyses adenosine(37) in tRNA1(Val) + S-adenosyl-L-methionine = N(6)-methyladenosine(37) in tRNA1(Val) + S-adenosyl-L-homocysteine + H(+). In terms of biological role, specifically methylates the adenine in position 37 of tRNA(1)(Val) (anticodon cmo5UAC). The protein is tRNA1(Val) (adenine(37)-N6)-methyltransferase of Shewanella sp. (strain W3-18-1).